The sequence spans 377 residues: Guanine nucleotide-binding protein subunit beta (377 aa).

WD repeat units lie at residues 63 to 93, 105 to 135, 154 to 185, 202 to 233, 246 to 276, 293 to 323, and 339 to 369; these read GHTG…IVWN, LPCA…SIFN, GHKG…VLWD, GHTA…RLWD, GHES…RLFD, GDIP…YVWD, and SHEG…KIWA.

The protein belongs to the WD repeat G protein beta family. G proteins are composed of 3 units, alpha, beta and gamma.

Guanine nucleotide-binding proteins (G proteins) are involved as a modulator or transducer in various transmembrane signaling systems. The beta and gamma chains are required for the GTPase activity, for replacement of GDP by GTP, and for G protein-effector interaction. The protein is Guanine nucleotide-binding protein subunit beta (GB1) of Solanum tuberosum (Potato).